Reading from the N-terminus, the 347-residue chain is GMP reductase (347 aa).

Aspartate 108–alanine 131 serves as a coordination point for NADP(+). K(+)-binding residues include glycine 181 and glycine 183. The active-site Thioimidate intermediate is cysteine 186. Residue isoleucine 216–valine 239 coordinates NADP(+).

The protein belongs to the IMPDH/GMPR family. GuaC type 1 subfamily. In terms of assembly, homotetramer.

It catalyses the reaction IMP + NH4(+) + NADP(+) = GMP + NADPH + 2 H(+). In terms of biological role, catalyzes the irreversible NADPH-dependent deamination of GMP to IMP. It functions in the conversion of nucleobase, nucleoside and nucleotide derivatives of G to A nucleotides, and in maintaining the intracellular balance of A and G nucleotides. This chain is GMP reductase, found in Aeromonas hydrophila subsp. hydrophila (strain ATCC 7966 / DSM 30187 / BCRC 13018 / CCUG 14551 / JCM 1027 / KCTC 2358 / NCIMB 9240 / NCTC 8049).